A 280-amino-acid polypeptide reads, in one-letter code: MGWSGSPLTLPPLRGSPPLPQVERDRTQPQLLAFADAFPSEGRGELRSRERRGEATGRGGLRMTAPTRPLGHLYLVATPRPGQSEAEFLRRVEDALAGGVDTLQLRCKADSGQYGEARPYIALAERLRDLAHARNVPFFVNDRVDVALAAGADGVHLGQNDLPVEWARLMAPGLRVGRSTHRPEDAARALAEAPAYFATGPVHATPTKPGRVAAGLGYVRHIAALRPTLPWYAIGGIDLGNVQAVLDAGATRIAVVRAVLDADDCAAAAHALREALMVNG.

The disordered stretch occupies residues 1 to 64; it reads MGWSGSPLTL…ATGRGGLRMT (64 aa). Residues 42–55 are compositionally biased toward basic and acidic residues; that stretch reads GRGELRSRERRGEA. 4-amino-2-methyl-5-(diphosphooxymethyl)pyrimidine-binding positions include 104-108 and asparagine 141; that span reads QLRCK. The Mg(2+) site is built by aspartate 142 and aspartate 161. Serine 179 lines the 4-amino-2-methyl-5-(diphosphooxymethyl)pyrimidine pocket. 205 to 207 serves as a coordination point for 2-[(2R,5Z)-2-carboxy-4-methylthiazol-5(2H)-ylidene]ethyl phosphate; that stretch reads TPT. Lysine 208 contacts 4-amino-2-methyl-5-(diphosphooxymethyl)pyrimidine. Glycine 236 is a binding site for 2-[(2R,5Z)-2-carboxy-4-methylthiazol-5(2H)-ylidene]ethyl phosphate.

It belongs to the thiamine-phosphate synthase family. Mg(2+) serves as cofactor.

The enzyme catalyses 2-[(2R,5Z)-2-carboxy-4-methylthiazol-5(2H)-ylidene]ethyl phosphate + 4-amino-2-methyl-5-(diphosphooxymethyl)pyrimidine + 2 H(+) = thiamine phosphate + CO2 + diphosphate. The catalysed reaction is 2-(2-carboxy-4-methylthiazol-5-yl)ethyl phosphate + 4-amino-2-methyl-5-(diphosphooxymethyl)pyrimidine + 2 H(+) = thiamine phosphate + CO2 + diphosphate. It carries out the reaction 4-methyl-5-(2-phosphooxyethyl)-thiazole + 4-amino-2-methyl-5-(diphosphooxymethyl)pyrimidine + H(+) = thiamine phosphate + diphosphate. It functions in the pathway cofactor biosynthesis; thiamine diphosphate biosynthesis; thiamine phosphate from 4-amino-2-methyl-5-diphosphomethylpyrimidine and 4-methyl-5-(2-phosphoethyl)-thiazole: step 1/1. In terms of biological role, condenses 4-methyl-5-(beta-hydroxyethyl)thiazole monophosphate (THZ-P) and 2-methyl-4-amino-5-hydroxymethyl pyrimidine pyrophosphate (HMP-PP) to form thiamine monophosphate (TMP). The sequence is that of Thiamine-phosphate synthase from Deinococcus radiodurans (strain ATCC 13939 / DSM 20539 / JCM 16871 / CCUG 27074 / LMG 4051 / NBRC 15346 / NCIMB 9279 / VKM B-1422 / R1).